Reading from the N-terminus, the 679-residue chain is MSEKINTKPFILHSDFRPSGDQPQAIEKLAENLTDGLAHQTLLGVTGSGKTFTIANVIAQLNRPAMLLAPNKTLAAQLYAEMKAFFPENAVEYFVSYYDYYQPEAYVPSSDTFIEKDASINDQIEQMRLSATKSFLERRDTIVVASVSAIYGLGDPDSYLQMMLHLQQGAIIDQRQILAKLAELQYTRNDQAFQRGTFRVRGEIIDIFPAESDDRAVRIELFDDEIERLSLFDPLTGSSFGAVPRFTIYPKTHYVTPRERILDAIENIKKELVSRREYFIKEHKLLEEQRISQRTQFDIEMMNELGYCSGIENYSRYLSGRNEGEPPPTLFDYMPPDAILIIDESHVTVPQIGGMYRGDRSRKETLVEYGFRLPSALDNRPLRFEEFERLAPQTIYVSATPGAYELEKSGSEIIDQVVRPTGLLDPLIEIRPVSIQVDDLLSEARQRADKNERVLVTTLTKKMAEDLTDYLDEHGIRVRYLHSDIDTVERVEIIRDLRLGEFDVLVGINLLREGLDIPEVSLVAILDADKEGFLRSERSLIQTIGRAARNLNGKAILYADSITKSMEKAITETNRRREKQTKYNEEHGIVPQALNKKVGELLDIGQGANQKAKANKQRGKMAAEPTALYNAPKNAKEYQQQIKKLEQQMYKFAQDLEFEKAAAIRDQLHQLREQFVFDN.

Residues 31-414 (ENLTDGLAHQ…ELEKSGSEII (384 aa)) enclose the Helicase ATP-binding domain. 44–51 (GVTGSGKT) serves as a coordination point for ATP. Positions 97 to 120 (YYDYYQPEAYVPSSDTFIEKDASI) match the Beta-hairpin motif. The region spanning 436–589 (QVDDLLSEAR…QTKYNEEHGI (154 aa)) is the Helicase C-terminal domain. Positions 639 to 674 (QQQIKKLEQQMYKFAQDLEFEKAAAIRDQLHQLREQ) constitute a UVR domain.

This sequence belongs to the UvrB family. Forms a heterotetramer with UvrA during the search for lesions. Interacts with UvrC in an incision complex.

It is found in the cytoplasm. The UvrABC repair system catalyzes the recognition and processing of DNA lesions. A damage recognition complex composed of 2 UvrA and 2 UvrB subunits scans DNA for abnormalities. Upon binding of the UvrA(2)B(2) complex to a putative damaged site, the DNA wraps around one UvrB monomer. DNA wrap is dependent on ATP binding by UvrB and probably causes local melting of the DNA helix, facilitating insertion of UvrB beta-hairpin between the DNA strands. Then UvrB probes one DNA strand for the presence of a lesion. If a lesion is found the UvrA subunits dissociate and the UvrB-DNA preincision complex is formed. This complex is subsequently bound by UvrC and the second UvrB is released. If no lesion is found, the DNA wraps around the other UvrB subunit that will check the other stand for damage. In Haemophilus influenzae (strain ATCC 51907 / DSM 11121 / KW20 / Rd), this protein is UvrABC system protein B.